The sequence spans 849 residues: Formin-like protein 4 (849 aa).

The N-terminal stretch at 1 to 22 (MPPTLALLLFLALSAVAAVGGA) is a signal peptide. Positions 36–104 (IEWTPPPSTA…RARGGGGGGT (69 aa)) are disordered. The segment covering 38-52 (WTPPPSTASPSPPSP) has biased composition (pro residues). Over residues 53–64 (DFSSDPSTPATP) the composition is skewed to low complexity. Residues 109–129 (IVVASAAAAAVLALLAFAAAF) form a helical membrane-spanning segment. Basic and acidic residues predominate over residues 185 to 194 (ARRGMCRDVD). The disordered stretch occupies residues 185–364 (ARRGMCRDVD…PEPPTGPVSA (180 aa)). The span at 234–246 (GSGGGGGGEGGGT) shows a compositional bias: gly residues. Residues 247-279 (WSEASASSPRTTTASRRSLPSLTSDFFPTTPAA) are compositionally biased toward low complexity. Pro residues-rich tracts occupy residues 280 to 297 (APVP…PPAP), 324 to 339 (PSNP…PPPS), and 346 to 360 (PKPP…PPTG). One can recognise an FH2 domain in the interval 406 to 823 (EAAGDEPRPK…SARSFRISAA (418 aa)).

The protein belongs to the formin-like family. Class-I subfamily.

Its subcellular location is the membrane. This is Formin-like protein 4 (FH4) from Oryza sativa subsp. japonica (Rice).